We begin with the raw amino-acid sequence, 165 residues long: MPPSLRKAVAAAIGGGAIAIASVLITGPSGNDGLEGVSYIPYKDIVGVWTVCHGHTGKDIMLGKTYTKAECKALLNKDLATVARQINPYIKVDIPETTRGPLYSFVYNVGAGNFRTSTLLRKINQGDIKGACDQLRRWTYAGGKQWKGLMTRREIEREVCLWGQQ.

The chain crosses the membrane as a helical; Signal-anchor for type II membrane protein span at residues 8–28 (AVAAAIGGGAIAIASVLITGP). Residues Glu-35 and Asp-44 each act as proton donor/acceptor in the active site.

It belongs to the glycosyl hydrolase 24 family.

The protein resides in the host cell inner membrane. The enzyme catalyses Hydrolysis of (1-&gt;4)-beta-linkages between N-acetylmuramic acid and N-acetyl-D-glucosamine residues in a peptidoglycan and between N-acetyl-D-glucosamine residues in chitodextrins.. Its function is as follows. Signal-arrest-release (SAR) endolysin with lysozyme activity that degrades host peptidoglycans and participates with the pinholin and spanin proteins in the sequential events which lead to programmed host cell lysis releasing the mature viral particles. Once the pinholin has permeabilized the host cell membrane, the SAR-endolysin is released into the periplasm where it breaks down the peptidoglycan layer. This is SAR-endolysin (15) from Enterobacteria phage PA-2 (Bacteriophage PA-2).